Reading from the N-terminus, the 106-residue chain is Nucleoid-associated protein RPA0616 (106 aa).

Belongs to the YbaB/EbfC family. In terms of assembly, homodimer.

The protein localises to the cytoplasm. The protein resides in the nucleoid. In terms of biological role, binds to DNA and alters its conformation. May be involved in regulation of gene expression, nucleoid organization and DNA protection. The protein is Nucleoid-associated protein RPA0616 of Rhodopseudomonas palustris (strain ATCC BAA-98 / CGA009).